The following is a 63-amino-acid chain: Prokaryotic ubiquitin-like protein Pup (63 aa).

Positions 1–35 (MSGQQSQINAGGGNGQGGDTPEFDAGQVSINSAGT) are disordered. Residues 19–57 (DTPEFDAGQVSINSAGTDDLLDEIDGLLESNAEEFVRSY) form an ARC ATPase binding region. Glu63 participates in a covalent cross-link: Isoglutamyl lysine isopeptide (Glu-Lys) (interchain with K-? in acceptor proteins).

This sequence belongs to the prokaryotic ubiquitin-like protein family. As to quaternary structure, strongly interacts with the proteasome-associated ATPase ARC through a hydrophobic interface; the interacting region of Pup lies in its C-terminal half. There is one Pup binding site per ARC hexamer ring.

It functions in the pathway protein degradation; proteasomal Pup-dependent pathway. Protein modifier that is covalently attached to lysine residues of substrate proteins, thereby targeting them for proteasomal degradation. The tagging system is termed pupylation. This Corynebacterium aurimucosum (strain ATCC 700975 / DSM 44827 / CIP 107346 / CN-1) (Corynebacterium nigricans) protein is Prokaryotic ubiquitin-like protein Pup.